Here is a 113-residue protein sequence, read N- to C-terminus: Cytochrome c oxidase subunit 7A2-like, mitochondrial (113 aa).

A mitochondrion-targeting transit peptide spans 1–54 (MYYKFSSFTQKLAGAWASEAYTPQGLKPVSTEAPPIIFATPTKLTSSVTAYDYS). Position 68 is an N6-acetyllysine (Lys-68). A helical membrane pass occupies residues 81–106 (PDQMLYRTTMALTLGGTIYCLIALYM).

Belongs to the cytochrome c oxidase VIIa family. As to quaternary structure, interacts with the mitochondrial respiratory complexes III (CIII) and IV (CIV), promoting their association.

It is found in the mitochondrion inner membrane. Its pathway is energy metabolism; oxidative phosphorylation. Functionally, assembly factor that mediates the formation of some mitochondrial respiratory supercomplexes (respirasomes), thereby promoting oxidative phosphorylation and energy metabolism. Acts as a molecular adapter that associates with both mitochondrial respiratory complexes III (CIII) and IV (CIV), promoting their association. Mediates the formation of various mitochondrial respiratory supercomplexes, such as MCIII(2)IV(2), composed of two CIII and two CIV, and the CS-respirasome (MCI(1)III(2)IV(2)), composed of one CI, two CIII and two CIV. Not involved in the formation of the canonical respirasome (MCI(1)III(2)IV(1)), composed of one CI, two CIII and one CIV. The formation of different respirasomes is important for cell adaptation to oxygen conditions and prevent metabolic exhaustion: supercomplexes mediated by COX7A2L/SCAF1 are required to maintain oxidative phosphorylation upon low oxygen conditions and promote metabolic rewiring toward glycolysis. This chain is Cytochrome c oxidase subunit 7A2-like, mitochondrial, found in Mus musculus (Mouse).